The following is a 248-amino-acid chain: Probable transcriptional regulatory protein Acel_1346 (248 aa).

The protein belongs to the TACO1 family.

The protein localises to the cytoplasm. The protein is Probable transcriptional regulatory protein Acel_1346 of Acidothermus cellulolyticus (strain ATCC 43068 / DSM 8971 / 11B).